The following is a 191-amino-acid chain: Molybdenum cofactor guanylyltransferase (191 aa).

Residues L13–G15, K26, D72, and D102 each bind GTP. Residue D102 participates in Mg(2+) binding.

Belongs to the MobA family. In terms of assembly, monomer. Requires Mg(2+) as cofactor.

It localises to the cytoplasm. The catalysed reaction is Mo-molybdopterin + GTP + H(+) = Mo-molybdopterin guanine dinucleotide + diphosphate. In terms of biological role, transfers a GMP moiety from GTP to Mo-molybdopterin (Mo-MPT) cofactor (Moco or molybdenum cofactor) to form Mo-molybdopterin guanine dinucleotide (Mo-MGD) cofactor. The chain is Molybdenum cofactor guanylyltransferase from Pseudomonas putida (strain ATCC 700007 / DSM 6899 / JCM 31910 / BCRC 17059 / LMG 24140 / F1).